Here is a 361-residue protein sequence, read N- to C-terminus: Phosphoserine aminotransferase (361 aa).

Arg-42 contributes to the L-glutamate binding site. Residues 76–77, Trp-102, Thr-152, Asp-172, and Gln-195 contribute to the pyridoxal 5'-phosphate site; that span reads AT. Lys-196 carries the N6-(pyridoxal phosphate)lysine modification. 237-238 provides a ligand contact to pyridoxal 5'-phosphate; that stretch reads NT.

The protein belongs to the class-V pyridoxal-phosphate-dependent aminotransferase family. SerC subfamily. As to quaternary structure, homodimer. It depends on pyridoxal 5'-phosphate as a cofactor.

It is found in the cytoplasm. The enzyme catalyses O-phospho-L-serine + 2-oxoglutarate = 3-phosphooxypyruvate + L-glutamate. It catalyses the reaction 4-(phosphooxy)-L-threonine + 2-oxoglutarate = (R)-3-hydroxy-2-oxo-4-phosphooxybutanoate + L-glutamate. It functions in the pathway amino-acid biosynthesis; L-serine biosynthesis; L-serine from 3-phospho-D-glycerate: step 2/3. Its pathway is cofactor biosynthesis; pyridoxine 5'-phosphate biosynthesis; pyridoxine 5'-phosphate from D-erythrose 4-phosphate: step 3/5. Functionally, catalyzes the reversible conversion of 3-phosphohydroxypyruvate to phosphoserine and of 3-hydroxy-2-oxo-4-phosphonooxybutanoate to phosphohydroxythreonine. The protein is Phosphoserine aminotransferase of Stenotrophomonas maltophilia (strain R551-3).